The sequence spans 887 residues: Alanine--tRNA ligase (887 aa).

Residues His565, His569, Cys674, and His678 each contribute to the Zn(2+) site.

It belongs to the class-II aminoacyl-tRNA synthetase family. Zn(2+) is required as a cofactor.

The protein localises to the cytoplasm. It carries out the reaction tRNA(Ala) + L-alanine + ATP = L-alanyl-tRNA(Ala) + AMP + diphosphate. In terms of biological role, catalyzes the attachment of alanine to tRNA(Ala) in a two-step reaction: alanine is first activated by ATP to form Ala-AMP and then transferred to the acceptor end of tRNA(Ala). Also edits incorrectly charged Ser-tRNA(Ala) and Gly-tRNA(Ala) via its editing domain. The chain is Alanine--tRNA ligase from Erythrobacter litoralis (strain HTCC2594).